The following is a 766-amino-acid chain: LPS-assembly protein LptD (766 aa).

Residues 1–18 form the signal peptide; it reads MQIRYFLALSLLPNIVLA.

Belongs to the LptD family. In terms of assembly, component of the lipopolysaccharide transport and assembly complex. Interacts with LptE and LptA.

The protein resides in the cell outer membrane. Together with LptE, is involved in the assembly of lipopolysaccharide (LPS) at the surface of the outer membrane. This chain is LPS-assembly protein LptD, found in Shewanella frigidimarina (strain NCIMB 400).